A 1068-amino-acid polypeptide reads, in one-letter code: Disheveled-associated activator of morphogenesis 2 (1068 aa).

One can recognise a GBD/FH3 domain in the interval serine 40 to valine 416. Residues methionine 434–threonine 516 are a coiled coil. Residues leucine 514 to tyrosine 586 form a disordered region. Residues proline 518–arginine 594 form the FH1 domain. Residues leucine 540–proline 572 show a composition bias toward pro residues. Residues lysine 595–methionine 994 enclose the FH2 domain. Phosphoserine is present on serine 1015. In terms of domain architecture, DAD spans serine 1016–lysine 1048.

This sequence belongs to the formin homology family. As to quaternary structure, interacts with DVL3. Interacts with INF2. Expressed in most tissues examined. Expressed in kidney glomeruli.

Its function is as follows. Key regulator of the Wnt signaling pathway, which is required for various processes during development, such as dorsal patterning, determination of left/right symmetry or myelination in the central nervous system. Acts downstream of Wnt ligands and upstream of beta-catenin (CTNNB1). Required for canonical Wnt signaling pathway during patterning in the dorsal spinal cord by promoting the aggregation of Disheveled (Dvl) complexes, thereby clustering and formation of Wnt receptor signalosomes and potentiating Wnt activity. During dorsal patterning of the spinal cord, inhibits oligodendrocytes differentiation via interaction with PIP5K1A. Also regulates non-canonical Wnt signaling pathway. Acts downstream of PITX2 in the developing gut and is required for left/right asymmetry within dorsal mesentery: affects mesenchymal condensation by lengthening cadherin-based junctions through WNT5A and non-canonical Wnt signaling, inducing polarized condensation in the left dorsal mesentery necessary to initiate gut rotation. Together with DAAM1, required for myocardial maturation and sarcomere assembly. Is a regulator of actin nucleation and elongation, filopodia formation and podocyte migration. The sequence is that of Disheveled-associated activator of morphogenesis 2 from Homo sapiens (Human).